Consider the following 481-residue polypeptide: Glutamine synthetase (481 aa).

Residues 22 to 106 (NEVEFVDFRF…VFCDVYDVYK (85 aa)) enclose the GS beta-grasp domain. Positions 114–481 (PRSIAKKALK…PFEFITTYSC (368 aa)) constitute a GS catalytic domain. The Mg(2+) site is built by Glu-139, Glu-141, Glu-223, and Glu-230. L-glutamate contacts are provided by residues 274-275 (NG) and Gly-275. His-279 contributes to the Mg(2+) binding site. ATP contacts are provided by residues 281–283 (HVS) and Ser-283. L-glutamate-binding residues include Arg-331, Glu-337, and Arg-349. Residues Arg-349 and Arg-354 each contribute to the ATP site. Residue Glu-367 coordinates Mg(2+). Arg-369 serves as a coordination point for L-glutamate.

Belongs to the glutamine synthetase family. Oligomer of 12 subunits arranged in the form of two hexameric ring. The cofactor is Mg(2+).

The protein localises to the cytoplasm. The enzyme catalyses L-glutamate + NH4(+) + ATP = L-glutamine + ADP + phosphate + H(+). Its activity is regulated as follows. The activity of this enzyme could be controlled by adenylation under conditions of abundant glutamine. Catalyzes the ATP-dependent biosynthesis of glutamine from glutamate and ammonia. The chain is Glutamine synthetase from Helicobacter pylori (strain J99 / ATCC 700824) (Campylobacter pylori J99).